The following is a 474-amino-acid chain: MNFWLQEQAQSNGNRLAIVTNQLSLTYEELYHRAKTIAEYLTSLNQKRIGLYISNDIDSVVLIHACWLAHIEIAMINTRLTRHEMINQMNSVDIATIVHTLPLELEGFNLYHFNDLTQLDKHDVSGYKFNLESIASIMFTSGTTGPQKAVPQTFNNHLASAKGCKQSLGFEQNTVWLSVLPIYHISGLSVILRAVIEGFTVRLVKKFQTDDMLTQIKTYPITHMSLVPQTLKWLMDAGLTQPFSLEKILLGGAKLSPQLIEQALTYRLPVYNSFGMTETCSQFLTASPQMLKERFDTVGKPSENVEVKIKNPNAYGHGELLIKGENVMNGYLYPKYLKDTFDNDGYFQTGDIAEIDDEGYVIIYDRRKDLIISGGENIYPYQIETIAKDFEGIEDAVCVGISDDTWGQVPILYYVTNQDINQTELIEHFENHLARYKIPKKYYQVKSLPYTSTGKLQRKKVKSEDLNEGKNNES.

Belongs to the ATP-dependent AMP-binding enzyme family. MenE subfamily.

It catalyses the reaction 2-succinylbenzoate + ATP + CoA = 2-succinylbenzoyl-CoA + AMP + diphosphate. Its pathway is quinol/quinone metabolism; 1,4-dihydroxy-2-naphthoate biosynthesis; 1,4-dihydroxy-2-naphthoate from chorismate: step 5/7. It participates in quinol/quinone metabolism; menaquinone biosynthesis. Converts 2-succinylbenzoate (OSB) to 2-succinylbenzoyl-CoA (OSB-CoA). The polypeptide is 2-succinylbenzoate--CoA ligase (Staphylococcus epidermidis (strain ATCC 35984 / DSM 28319 / BCRC 17069 / CCUG 31568 / BM 3577 / RP62A)).